The primary structure comprises 321 residues: Annexin A5 (321 aa).

Ala-2 carries the post-translational modification N-acetylalanine. Annexin repeat units lie at residues 15–86, 87–158, 170–242, and 246–317; these read FDER…ALMK, PSRL…VLLQ, AQVE…AVVK, and SIPA…LLCG. Lys-29 is covalently cross-linked (Glycyl lysine isopeptide (Lys-Gly) (interchain with G-Cter in SUMO1); alternate). A Glycyl lysine isopeptide (Lys-Gly) (interchain with G-Cter in SUMO2); alternate cross-link involves residue Lys-29. An N6-acetyllysine mark is found at Lys-70, Lys-76, Lys-79, Lys-97, and Lys-101. N6-succinyllysine is present on Lys-290. Residues 314 to 320 carry the [IL]-x-C-x-x-[DE] motif motif; sequence LLCGGED.

Belongs to the annexin family. Monomer. Binds ATRX and EIF5B. In terms of processing, S-nitrosylation is induced by interferon-gamma and oxidatively-modified low-densitity lipoprotein (LDL(ox)) possibly implicating the iNOS-S100A8/9 transnitrosylase complex.

Its function is as follows. This protein is an anticoagulant protein that acts as an indirect inhibitor of the thromboplastin-specific complex, which is involved in the blood coagulation cascade. This is Annexin A5 (ANXA5) from Bos taurus (Bovine).